A 606-amino-acid chain; its full sequence is Elongation factor 4 (606 aa).

The tr-type G domain occupies 10 to 192; the sequence is ENIRNFSIIA…AIVQQLPAPK (183 aa). GTP contacts are provided by residues 22–27 and 139–142; these read DHGKST and NKID.

Belongs to the TRAFAC class translation factor GTPase superfamily. Classic translation factor GTPase family. LepA subfamily.

The protein resides in the cell membrane. The catalysed reaction is GTP + H2O = GDP + phosphate + H(+). Required for accurate and efficient protein synthesis under certain stress conditions. May act as a fidelity factor of the translation reaction, by catalyzing a one-codon backward translocation of tRNAs on improperly translocated ribosomes. Back-translocation proceeds from a post-translocation (POST) complex to a pre-translocation (PRE) complex, thus giving elongation factor G a second chance to translocate the tRNAs correctly. Binds to ribosomes in a GTP-dependent manner. The protein is Elongation factor 4 of Lawsonia intracellularis (strain PHE/MN1-00).